Reading from the N-terminus, the 760-residue chain is UDP-N-acetylmuramoyl-L-alanyl-D-glutamate--2,6-diaminopimelate ligase MurE homolog, chloroplastic (760 aa).

The transit peptide at 1–59 (MATAPLAFRLPFPFSFPSASRPPPSRILAPPTPRRLPLRLAAAAARRFRPPTADDEPPE) directs the protein to the chloroplast. 2 disordered regions span residues 13–159 (PFSF…TDEL) and 176–205 (LSVV…DEDG). Residues 20–34 (SRPPPSRILAPPTPR) show a composition bias toward pro residues. Residues 53-62 (ADDEPPEAAE) are compositionally biased toward acidic residues. The segment covering 118–132 (EIDRAIAEKREEFTR) has biased composition (basic and acidic residues). Acidic residues-rich tracts occupy residues 150-159 (PEDEDLTDEL) and 182-205 (ADEE…DEDG).

Belongs to the MurCDEF family. MurE subfamily. As to quaternary structure, component of the plastid-encoded plastid RNA polymerase (PEP) complex.

It localises to the plastid. It is found in the chloroplast. Functionally, required for the activity of the plastid-encoded RNA polymerase (PEP) and full expression of genes transcribed by PEP. Required for the proper build-up and formation of the PEP-complex. This Zea mays (Maize) protein is UDP-N-acetylmuramoyl-L-alanyl-D-glutamate--2,6-diaminopimelate ligase MurE homolog, chloroplastic.